The following is a 296-amino-acid chain: Light-independent protochlorophyllide reductase iron-sulfur ATP-binding protein (296 aa).

ATP-binding positions include 10-15 and Lys-39; that span reads GIGKST. Residue Ser-14 coordinates Mg(2+). [4Fe-4S] cluster-binding residues include Cys-95 and Cys-129. 180-181 serves as a coordination point for ATP; it reads NR.

Belongs to the NifH/BchL/ChlL family. As to quaternary structure, homodimer. Protochlorophyllide reductase is composed of three subunits; ChlL, ChlN and ChlB. The cofactor is [4Fe-4S] cluster.

The protein localises to the plastid. Its subcellular location is the chloroplast. The catalysed reaction is chlorophyllide a + oxidized 2[4Fe-4S]-[ferredoxin] + 2 ADP + 2 phosphate = protochlorophyllide a + reduced 2[4Fe-4S]-[ferredoxin] + 2 ATP + 2 H2O. The protein operates within porphyrin-containing compound metabolism; chlorophyll biosynthesis (light-independent). Its function is as follows. Component of the dark-operative protochlorophyllide reductase (DPOR) that uses Mg-ATP and reduced ferredoxin to reduce ring D of protochlorophyllide (Pchlide) to form chlorophyllide a (Chlide). This reaction is light-independent. The L component serves as a unique electron donor to the NB-component of the complex, and binds Mg-ATP. This chain is Light-independent protochlorophyllide reductase iron-sulfur ATP-binding protein, found in Chlorokybus atmophyticus (Soil alga).